Reading from the N-terminus, the 325-residue chain is MRSVQAPVVCPAIRPRQVGACASLVNYTGLKPRSQFWGNRTKGVKSQGTTTTITLRLCNKSIKCVFSSHSDGNGSTAENFNENDEEYVNSSVVEAVEVKSGADGFMVKMRDGRQLRCVHNNPQGGHLPDYAPHPAIVLKMEDGTGLLLPIIVLEMPSVLLMAAMTNVQIARPTMYQVVKEMVDKMGYEVRLVRVTKRVHEAYFAQLFLSKVGNASECVSFDLRPSDAINIAVRCKIPIQVNKYLAYSDGMRVIESGKISTPAPASDGLLFTEQDRPNGQACLDTKEFNILSKMMQAVDEERYDEAAEWRDKLGQFRAKRNLRKYT.

The region spanning 117–252 (CVHNNPQGGH…YLAYSDGMRV (136 aa)) is the BFN domain. Positions 284–318 (TKEFNILSKMMQAVDEERYDEAAEWRDKLGQFRAK) constitute a UVR domain.

Belongs to the bifunctional nuclease family.

Its subcellular location is the nucleus. In terms of biological role, bifunctional nuclease with both RNase and DNase activities. Involved in basal defense response. Participates in abscisic acid-derived callose deposition following infection by a necrotrophic pathogen. In Arabidopsis thaliana (Mouse-ear cress), this protein is Bifunctional nuclease 1 (BBD1).